The chain runs to 621 residues: Altered inheritance of mitochondria protein 9, mitochondrial (621 aa).

The transit peptide at 1 to 40 directs the protein to the mitochondrion; it reads MIRSTTAKLGKRCATLRVRASPILRPLVATRCITNKADEV.

The protein belongs to the AIM9 family.

It is found in the mitochondrion. In Zygosaccharomyces rouxii (strain ATCC 2623 / CBS 732 / NBRC 1130 / NCYC 568 / NRRL Y-229), this protein is Altered inheritance of mitochondria protein 9, mitochondrial (AIM9).